The sequence spans 482 residues: tRNA sulfurtransferase (482 aa).

Positions 61-165 (DVTLSVLTQT…NDKLNLIIAR (105 aa)) constitute a THUMP domain. ATP contacts are provided by residues 183 to 184 (LI), lysine 265, glycine 287, and glutamine 296. A disulfide bridge links cysteine 344 with cysteine 456. The 79-residue stretch at 404–482 (LGSDVVVLDI…GYKNVKVYRP (79 aa)) folds into the Rhodanese domain. Cysteine 456 acts as the Cysteine persulfide intermediate in catalysis.

Belongs to the ThiI family.

The protein resides in the cytoplasm. It carries out the reaction [ThiI sulfur-carrier protein]-S-sulfanyl-L-cysteine + a uridine in tRNA + 2 reduced [2Fe-2S]-[ferredoxin] + ATP + H(+) = [ThiI sulfur-carrier protein]-L-cysteine + a 4-thiouridine in tRNA + 2 oxidized [2Fe-2S]-[ferredoxin] + AMP + diphosphate. It catalyses the reaction [ThiS sulfur-carrier protein]-C-terminal Gly-Gly-AMP + S-sulfanyl-L-cysteinyl-[cysteine desulfurase] + AH2 = [ThiS sulfur-carrier protein]-C-terminal-Gly-aminoethanethioate + L-cysteinyl-[cysteine desulfurase] + A + AMP + 2 H(+). It functions in the pathway cofactor biosynthesis; thiamine diphosphate biosynthesis. Functionally, catalyzes the ATP-dependent transfer of a sulfur to tRNA to produce 4-thiouridine in position 8 of tRNAs, which functions as a near-UV photosensor. Also catalyzes the transfer of sulfur to the sulfur carrier protein ThiS, forming ThiS-thiocarboxylate. This is a step in the synthesis of thiazole, in the thiamine biosynthesis pathway. The sulfur is donated as persulfide by IscS. This chain is tRNA sulfurtransferase, found in Aliivibrio fischeri (strain MJ11) (Vibrio fischeri).